The sequence spans 348 residues: Putative [LysW]-L-2-aminoadipate/[LysW]-L-glutamate phosphate reductase (348 aa).

Residue 9-12 (SGYV) coordinates NADP(+). Residue cysteine 149 is part of the active site. Residue asparagine 315 participates in NADP(+) binding.

The protein belongs to the NAGSA dehydrogenase family. Type 1 subfamily. LysY sub-subfamily.

The protein localises to the cytoplasm. The enzyme catalyses [amino-group carrier protein]-C-terminal-N-(1-carboxy-5-oxopentan-1-yl)-L-glutamine + phosphate + NADP(+) = [amino-group carrier protein]-C-terminal-N-(1-carboxy-5-phosphooxy-5-oxopentan-1-yl)-L-glutamine + NADPH + H(+). It carries out the reaction [amino-group carrier protein]-C-terminal-gamma-(L-glutamyl-5-semialdehyde)-L-glutamate + phosphate + NADP(+) = [amino-group carrier protein]-C-terminal-gamma-(5-phospho-L-glutamyl)-L-glutamate + NADPH + H(+). It functions in the pathway amino-acid biosynthesis; L-lysine biosynthesis via AAA pathway; L-lysine from L-alpha-aminoadipate (Thermus route): step 3/5. It participates in amino-acid biosynthesis; L-arginine biosynthesis. Involved in both the arginine and lysine biosynthetic pathways. The protein is Putative [LysW]-L-2-aminoadipate/[LysW]-L-glutamate phosphate reductase of Cenarchaeum symbiosum (strain A).